Here is a 378-residue protein sequence, read N- to C-terminus: Ferredoxin--NADP reductase, root isozyme, chloroplastic (378 aa).

The span at 1–17 shows a compositional bias: low complexity; it reads MATAVASQVAVSAPAGS. Residues 1–27 form a disordered region; sequence MATAVASQVAVSAPAGSDRGLRSSGIQ. A chloroplast-targeting transit peptide spans 1 to 62; the sequence is MATAVASQVA…PRHANKVLCM (62 aa). Residues 93 to 221 enclose the FAD-binding FR-type domain; it reads KEPYTATIVS…TGPSGKIMLL (129 aa). FAD is bound by residues 153–156, 174–176, Tyr180, 195–197, and Thr237; these read RLYS, CVR, and VCS. Ser156 and Arg176 together coordinate NADP(+). NADP(+) is bound by residues Thr237, 269 to 270, 299 to 300, Lys309, 337 to 338, and Glu376; these read VA, SR, and GL.

Belongs to the ferredoxin--NADP reductase type 1 family. FAD serves as cofactor.

The protein localises to the plastid. It is found in the chloroplast. It catalyses the reaction 2 reduced [2Fe-2S]-[ferredoxin] + NADP(+) + H(+) = 2 oxidized [2Fe-2S]-[ferredoxin] + NADPH. It functions in the pathway energy metabolism; photosynthesis. May play a key role in regulating the relative amounts of cyclic and non-cyclic electron flow to meet the demands of the plant for ATP and reducing power. Is involved in nitrate assimilation. The protein is Ferredoxin--NADP reductase, root isozyme, chloroplastic of Oryza sativa subsp. japonica (Rice).